Consider the following 851-residue polypeptide: DNA mismatch repair protein MutS (851 aa).

Gly-614–Ser-621 serves as a coordination point for ATP.

The protein belongs to the DNA mismatch repair MutS family.

In terms of biological role, this protein is involved in the repair of mismatches in DNA. It is possible that it carries out the mismatch recognition step. This protein has a weak ATPase activity. This is DNA mismatch repair protein MutS from Photorhabdus laumondii subsp. laumondii (strain DSM 15139 / CIP 105565 / TT01) (Photorhabdus luminescens subsp. laumondii).